The sequence spans 161 residues: Arachidonate 5-lipoxygenase-activating protein (161 aa).

The Lumenal segment spans residues 1–8 (MDQETVGN). Residues 9–30 (VVLLAIVTLISVVQNGFFAHKV) traverse the membrane as a helical segment. The Cytoplasmic portion of the chain corresponds to 31-52 (EHESRTQNGRSFQRTGTLAFER). Residues 53–77 (VYTANQNCVDAYPTFLAVLWSAGLL) form a helical membrane-spanning segment. The Lumenal segment spans residues 78-80 (CSQ). A helical transmembrane segment spans residues 81–102 (VPAAFAGLMYLFVRQKYFVGYL). At 103–107 (GERTQ) the chain is on the cytoplasmic side. Residues 108–115 (STPGYIFG) lie within the membrane without spanning it. Residues 116 to 128 (KRIILFLFLMSVA) form a helical membrane-spanning segment. Residues 129 to 161 (GIFNYYLIFFFGSDFENYIKTISTTISPLLLIP) lie on the Lumenal side of the membrane.

This sequence belongs to the MAPEG family. As to quaternary structure, homotrimer. Interacts with LTC4S and ALOX5.

Its subcellular location is the nucleus membrane. The protein localises to the endoplasmic reticulum membrane. Required for leukotriene biosynthesis by ALOX5 (5-lipoxygenase). Anchors ALOX5 to the membrane. Binds arachidonic acid, and could play an essential role in the transfer of arachidonic acid to ALOX5. Binds to MK-886, a compound that blocks the biosynthesis of leukotrienes. This chain is Arachidonate 5-lipoxygenase-activating protein (ALOX5AP), found in Homo sapiens (Human).